Consider the following 230-residue polypeptide: U2 small nuclear ribonucleoprotein A' (230 aa).

LRR repeat units follow at residues 19-40, 41-62, and 65-86; these read KDRE…PFFP, RLRM…LANS, and GLTT…DPLR. The LRRCT domain maps to 99-137; the sequence is NPVTRKEYYRLWIIWRIPSVRFLDYQKVKDAERAKAAEL. Residues 211–230 form a disordered region; sequence GRIPGGALDGAGNDGDQMQL. Over residues 213 to 223 the composition is skewed to gly residues; that stretch reads IPGGALDGAGN.

The protein belongs to the U2 small nuclear ribonucleoprotein A family. Associated with the spliceosome.

It localises to the nucleus. Its function is as follows. Involved in pre-mRNA splicing. The protein is U2 small nuclear ribonucleoprotein A' (lea1) of Emericella nidulans (strain FGSC A4 / ATCC 38163 / CBS 112.46 / NRRL 194 / M139) (Aspergillus nidulans).